The sequence spans 402 residues: Phosphoglycerate kinase (402 aa).

Substrate-binding positions include 24 to 26, R40, 63 to 66, R122, and R155; these read DFN and HFGR. Residues K206, G297, E328, and 357 to 360 contribute to the ATP site; that span reads GGDS.

It belongs to the phosphoglycerate kinase family. As to quaternary structure, monomer.

It localises to the cytoplasm. The catalysed reaction is (2R)-3-phosphoglycerate + ATP = (2R)-3-phospho-glyceroyl phosphate + ADP. Its pathway is carbohydrate degradation; glycolysis; pyruvate from D-glyceraldehyde 3-phosphate: step 2/5. In Synechococcus sp. (strain CC9311), this protein is Phosphoglycerate kinase.